The chain runs to 216 residues: Regulatory protein RecX (216 aa).

Belongs to the RecX family.

The protein resides in the cytoplasm. Functionally, modulates RecA activity. This chain is Regulatory protein RecX, found in Clostridium tetani (strain Massachusetts / E88).